The primary structure comprises 731 residues: Actin filament-associated protein 1 (731 aa).

At methionine 1 the chain carries N-acetylmethionine. The interval 56-90 is disordered; the sequence is NNLPAPPQMPLPEIPQPWLPPDSGPPPLPTSSLPE. Over residues 59–84 the composition is skewed to pro residues; the sequence is PAPPQMPLPEIPQPWLPPDSGPPPLP. Residues 70–73 carry the SH3-binding motif; it reads PQPW. Positions 93–96 match the SH2-binding 1 motif; it reads YEEA. The disordered stretch occupies residues 118–139; sequence SSSYESYDEEEEDGKGKKTRHQ. The PH 1 domain occupies 152-248; the sequence is DAKICAFLLR…WLKVIKEAYS (97 aa). The tract at residues 252-318 is disordered; sequence GPVDPECSPP…SKSEAKGTVS (67 aa). Over residues 271-284 the composition is skewed to basic and acidic residues; sequence AELEKKLSSERPSS. Phosphoserine occurs at positions 283 and 284. The region spanning 348–442 is the PH 2 domain; it reads DVPTCGYLNV…WIGILLAETG (95 aa). The short motif at 452–457 is the SH2-binding 2 element; that stretch reads YDYIDV. A disordered region spans residues 513–544; it reads KNKKPPASSNGVPVKGKAPSSQQKKVETAGGV. Serine 549 bears the Phosphoserine mark. Positions 558–649 form a coiled coil; the sequence is KNRVEADAKR…VKESLKKALA (92 aa). The interval 595–638 is interaction with F-actin; the sequence is DLRAAIEVNAGRKTQAALEDKLKRLEEECKQREAERVSLELELT. A disordered region spans residues 658 to 731; that stretch reads IEPRSGTSSP…AKEWELKNGT (74 aa). 3 positions are modified to phosphoserine: serine 665, serine 666, and serine 669. At threonine 676 the chain carries Phosphothreonine. The segment covering 678–687 has biased composition (polar residues); the sequence is ENSPISSCDT. 2 positions are modified to phosphoserine: serine 680 and serine 688. Over residues 721-731 the composition is skewed to basic and acidic residues; the sequence is KAKEWELKNGT.

Monomer and homomultimer. Interacts via its C-terminus with F-actin; probably involving AFAP1 multimers. Interacts with activated SRC SH3-SH2 domains. Interacts via its PH 1 domain with PRKCA, PRKCB and PRKCI. In terms of processing, phosphorylated on tyrosine residues by SRC.

Its subcellular location is the cytoplasm. The protein localises to the cytoskeleton. It localises to the stress fiber. Functionally, can cross-link actin filaments into both network and bundle structures. May modulate changes in actin filament integrity and induce lamellipodia formation. May function as an adapter molecule that links other proteins, such as SRC and PKC to the actin cytoskeleton. This is Actin filament-associated protein 1 (Afap1) from Mus musculus (Mouse).